A 739-amino-acid polypeptide reads, in one-letter code: Phosphoribosylformylglycinamidine synthase subunit PurL (739 aa).

H54 is an active-site residue. Y57 and K96 together coordinate ATP. E98 is a binding site for Mg(2+). Substrate contacts are provided by residues 99 to 102 and R121; that span reads SHNH. H100 (proton acceptor) is an active-site residue. Mg(2+) is bound at residue D122. Position 245 (Q245) interacts with substrate. D273 is a Mg(2+) binding site. 317 to 319 lines the substrate pocket; sequence ESQ. ATP contacts are provided by D500 and G537. Residue N538 participates in Mg(2+) binding. Position 540 (S540) interacts with substrate.

The protein belongs to the FGAMS family. In terms of assembly, monomer. Part of the FGAM synthase complex composed of 1 PurL, 1 PurQ and 2 PurS subunits.

It is found in the cytoplasm. It carries out the reaction N(2)-formyl-N(1)-(5-phospho-beta-D-ribosyl)glycinamide + L-glutamine + ATP + H2O = 2-formamido-N(1)-(5-O-phospho-beta-D-ribosyl)acetamidine + L-glutamate + ADP + phosphate + H(+). It participates in purine metabolism; IMP biosynthesis via de novo pathway; 5-amino-1-(5-phospho-D-ribosyl)imidazole from N(2)-formyl-N(1)-(5-phospho-D-ribosyl)glycinamide: step 1/2. Its function is as follows. Part of the phosphoribosylformylglycinamidine synthase complex involved in the purines biosynthetic pathway. Catalyzes the ATP-dependent conversion of formylglycinamide ribonucleotide (FGAR) and glutamine to yield formylglycinamidine ribonucleotide (FGAM) and glutamate. The FGAM synthase complex is composed of three subunits. PurQ produces an ammonia molecule by converting glutamine to glutamate. PurL transfers the ammonia molecule to FGAR to form FGAM in an ATP-dependent manner. PurS interacts with PurQ and PurL and is thought to assist in the transfer of the ammonia molecule from PurQ to PurL. The chain is Phosphoribosylformylglycinamidine synthase subunit PurL from Bacillus cereus (strain G9842).